A 658-amino-acid polypeptide reads, in one-letter code: Pro-secreted protein ORF2 (658 aa).

Residues 1–19 (MRSRALLFLLFVLLPMLPA) form the signal peptide. A disordered region spans residues 62 to 124 (SDIPAAAGTG…PDTAPVPDAD (63 aa)). Low complexity predominate over residues 91-122 (RPAASTRRRPAPAGASPLTAVAPAPDTAPVPD). N-linked (GlcNAc...) asparagine; by host glycosylation is found at Asn-135 and Asn-308. The particle formation stretch occupies residues 366-392 (IALTLFNLADTLLGGLPTELISSAGGQ). Residue Asn-560 is glycosylated (N-linked (GlcNAc...) asparagine; by host). The tract at residues 583 to 608 (TTNLGSGPVSVSAVGVLAPHSALAAL) is oligomerization.

The protein belongs to the hepevirus capsid protein family. As to quaternary structure, homodimer. In terms of assembly, self-assembles to form the capsid. The capsid is dominated by dimers that define the 30 morphological units. Interacts with phosphorylated protein ORF3. Interacts with host TMEM134. Interacts with host ASGR1 and ASGR2; these interactions facilitate infection of host hepatocytes. Cleaved by host protease in the N-terminus. In terms of processing, N-glycosylated. Post-translationally, not N-glycosylated. The C-terminus of the capsid protein ORF2 is truncated in non-enveloped virions shedded in feces, probably due to host proteases.

The protein resides in the secreted. It is found in the virion. Its subcellular location is the host cytoplasm. The protein localises to the host endoplasmic reticulum. It localises to the host Golgi apparatus. The protein resides in the host cell surface. It is found in the host nucleus. In terms of biological role, plays a role in the inhibition of host antibody-mediated neutralization without blocking viral cell entry. Its function is as follows. Forms an icosahedral capsid with a T=1 symmetry and a 34 nm diameter. The capsid is composed of 60 copies linked to each other. Binds to the 5' end of the genomic RNA to mediate genome encapsidation. Binds to heparin surface proteoglycans (HSPGs) to mediate viral entry. Additionally, the interactions with host ASGR1 and ASGR2 facilitate viral infection of hepatocytes. Inhibits IFN production by blocking host TBK1-induced IRF3 phosphorylation. The nuclear form probably modulates host gene expression. In Bandicota bengalensis (lesser bandicoot rat), this protein is Pro-secreted protein ORF2.